The sequence spans 195 residues: Imidazoleglycerol-phosphate dehydratase (195 aa).

The protein belongs to the imidazoleglycerol-phosphate dehydratase family.

It is found in the cytoplasm. The catalysed reaction is D-erythro-1-(imidazol-4-yl)glycerol 3-phosphate = 3-(imidazol-4-yl)-2-oxopropyl phosphate + H2O. It participates in amino-acid biosynthesis; L-histidine biosynthesis; L-histidine from 5-phospho-alpha-D-ribose 1-diphosphate: step 6/9. This Azoarcus sp. (strain BH72) protein is Imidazoleglycerol-phosphate dehydratase.